Consider the following 76-residue polypeptide: Transcription modulator YdgT (76 aa).

Belongs to the Hha/YmoA/Cnu family.

Functionally, binds to H-NS and modifies the range of genes it silences; H-NS alone silences 'core' genes while the H-NS-Hha complex (and presumably also H-NS-YdgT) silences genes acquired by horizontal gene transfer. Plays a role silencing virulence factors in the absence of factors that induce pathogenicity. The protein is Transcription modulator YdgT (ydgT) of Salmonella typhimurium (strain SL1344).